We begin with the raw amino-acid sequence, 233 residues long: Ion-translocating oxidoreductase complex subunit E (233 aa).

A run of 5 helical transmembrane segments spans residues 22-42 (LLGL…LGLG), 69-89 (IPIY…LINA), 93-113 (GLYQ…IVVG), 128-148 (ALDG…LGSI), and 182-202 (PMLL…LLAA).

The protein belongs to the NqrDE/RnfAE family. In terms of assembly, the complex is composed of six subunits: RnfA, RnfB, RnfC, RnfD, RnfE and RnfG.

The protein resides in the cell inner membrane. Its function is as follows. Part of a membrane-bound complex that couples electron transfer with translocation of ions across the membrane. The polypeptide is Ion-translocating oxidoreductase complex subunit E (Erwinia tasmaniensis (strain DSM 17950 / CFBP 7177 / CIP 109463 / NCPPB 4357 / Et1/99)).